Here is a 503-residue protein sequence, read N- to C-terminus: Probable mitochondrial-processing peptidase subunit alpha-1, mitochondrial (503 aa).

A mitochondrion-targeting transit peptide spans 1-59 (MYRTAASRARALKGVLTRSLRPARYASSSAVAETSSSTPAYLSWLSGGSRAALTSLDMP).

This sequence belongs to the peptidase M16 family. In terms of assembly, heterodimer of alpha and beta subunits, forming the mitochondrial processing protease (MPP) in which subunit alpha is involved in substrate recognition and binding and subunit beta is the catalytic subunit. Component of the ubiquinol-cytochrome c oxidoreductase (cytochrome b-c1 complex, complex III, CIII), a multisubunit enzyme composed of 10 subunits. The complex is composed of 3 respiratory subunits cytochrome b (MT-CYB), cytochrome c1 (CYC1-1 or CYC1-2) and Rieske protein (UCR1-1 or UCR1-2), 2 core protein subunits MPPalpha1 (or MPPalpha2) and MPPB, and 5 low-molecular weight protein subunits QCR7-1 (or QCR7-2), UCRQ-1 (or UCRQ-2), QCR9, UCRY and probably QCR6-1 (or QCR6-2). The complex exists as an obligatory dimer and forms supercomplexes (SCs) in the inner mitochondrial membrane with NADH-ubiquinone oxidoreductase (complex I, CI), resulting in different assemblies (supercomplexes SCI(1)III(2) and SCI(2)III(4)).

Its subcellular location is the mitochondrion matrix. It localises to the mitochondrion inner membrane. Functionally, substrate recognition and binding subunit of the essential mitochondrial processing protease (MPP), which cleaves the mitochondrial sequence off newly imported precursors proteins. Component of the ubiquinol-cytochrome c oxidoreductase, a multisubunit transmembrane complex that is part of the mitochondrial electron transport chain which drives oxidative phosphorylation. The respiratory chain contains 3 multisubunit complexes succinate dehydrogenase (complex II, CII), ubiquinol-cytochrome c oxidoreductase (cytochrome b-c1 complex, complex III, CIII) and cytochrome c oxidase (complex IV, CIV), that cooperate to transfer electrons derived from NADH and succinate to molecular oxygen, creating an electrochemical gradient over the inner membrane that drives transmembrane transport and the ATP synthase. The cytochrome b-c1 complex catalyzes electron transfer from ubiquinol to cytochrome c, linking this redox reaction to translocation of protons across the mitochondrial inner membrane, with protons being carried across the membrane as hydrogens on the quinol. In the process called Q cycle, 2 protons are consumed from the matrix, 4 protons are released into the intermembrane space and 2 electrons are passed to cytochrome c. The polypeptide is Probable mitochondrial-processing peptidase subunit alpha-1, mitochondrial (MPPalpha1) (Arabidopsis thaliana (Mouse-ear cress)).